The chain runs to 345 residues: NADH-ubiquinone oxidoreductase chain 2 (345 aa).

Helical transmembrane passes span 1–21, 25–45, 56–76, 92–114, 149–171, 178–198, 200–220, 241–261, 274–294, and 324–344; these read MNPITLAIIYFTIFLGPVITM, NLMLMWVGLEFSLLAIIPMLI, ATKYFVTQATASMIILLAIVL, GLILNMTLMALSMKLGLAPFHFW, LNSTIILMLAITSIFMGAWGGLN, IMAYSSIAHMGWMLAILPYNP, LTLLNLMIYIILTAPMFMALM, LTMISLMLLSLGGLPPLTGFL, NCLIMATLMAMMALLNLFFYT, and LMFSTLAIMSTMTLPLAPQLI.

It belongs to the complex I subunit 2 family. As to quaternary structure, core subunit of respiratory chain NADH dehydrogenase (Complex I) which is composed of 45 different subunits. Interacts with TMEM242.

It localises to the mitochondrion inner membrane. The enzyme catalyses a ubiquinone + NADH + 5 H(+)(in) = a ubiquinol + NAD(+) + 4 H(+)(out). In terms of biological role, core subunit of the mitochondrial membrane respiratory chain NADH dehydrogenase (Complex I) which catalyzes electron transfer from NADH through the respiratory chain, using ubiquinone as an electron acceptor. Essential for the catalytic activity and assembly of complex I. The protein is NADH-ubiquinone oxidoreductase chain 2 of Mus musculus (Mouse).